Here is a 210-residue protein sequence, read N- to C-terminus: Redox-sensing transcriptional repressor Rex (210 aa).

Residues lysine 17–phenylalanine 56 constitute a DNA-binding region (H-T-H motif). Glycine 91–glycine 96 serves as a coordination point for NAD(+).

It belongs to the transcriptional regulatory Rex family. As to quaternary structure, homodimer.

It is found in the cytoplasm. Modulates transcription in response to changes in cellular NADH/NAD(+) redox state. The polypeptide is Redox-sensing transcriptional repressor Rex (Clostridium botulinum (strain Eklund 17B / Type B)).